A 75-amino-acid polypeptide reads, in one-letter code: Small ribosomal subunit protein bS18 (75 aa).

This sequence belongs to the bacterial ribosomal protein bS18 family. As to quaternary structure, part of the 30S ribosomal subunit. Forms a tight heterodimer with protein bS6.

In terms of biological role, binds as a heterodimer with protein bS6 to the central domain of the 16S rRNA, where it helps stabilize the platform of the 30S subunit. This is Small ribosomal subunit protein bS18 from Acinetobacter baylyi (strain ATCC 33305 / BD413 / ADP1).